The chain runs to 60 residues: Protein K12 (60 aa).

The protein is Protein K12 (K12) of Human herpesvirus 8 type P (isolate GK18) (HHV-8).